The following is a 255-amino-acid chain: MLQIGPYTFQSRLLLGTGKYPNIDIQKEAVEASGAEILTFAVRRMNIFAPDQPNFLEKIDVTKYKLLPNTAGAKTAEEAVRIARLAKASGLCDMVKVEVIGCDQTLLPDPVETLKATEMLLEEGFIVLPYTSDDVVLAKRLQQLGCHAIMPGASPIGSGQGIINPLNIQFIIEQATVPVIIDAGIGGPADAALAMELGADGVLLNTAVASAKDPVKMAKAMKLAIEAGRLGYEAGRIPKKKYATASSPSEGMSIV.

Residue Lys-96 is the Schiff-base intermediate with DXP of the active site. Residues Gly-157, 183-184 (AG), and 205-206 (NT) each bind 1-deoxy-D-xylulose 5-phosphate.

This sequence belongs to the ThiG family. Homotetramer. Forms heterodimers with either ThiH or ThiS.

The protein resides in the cytoplasm. It carries out the reaction [ThiS sulfur-carrier protein]-C-terminal-Gly-aminoethanethioate + 2-iminoacetate + 1-deoxy-D-xylulose 5-phosphate = [ThiS sulfur-carrier protein]-C-terminal Gly-Gly + 2-[(2R,5Z)-2-carboxy-4-methylthiazol-5(2H)-ylidene]ethyl phosphate + 2 H2O + H(+). The protein operates within cofactor biosynthesis; thiamine diphosphate biosynthesis. Catalyzes the rearrangement of 1-deoxy-D-xylulose 5-phosphate (DXP) to produce the thiazole phosphate moiety of thiamine. Sulfur is provided by the thiocarboxylate moiety of the carrier protein ThiS. In vitro, sulfur can be provided by H(2)S. The sequence is that of Thiazole synthase from Anoxybacillus flavithermus (strain DSM 21510 / WK1).